The sequence spans 261 residues: tRNA pseudouridine synthase A (261 aa).

Residue Asp-51 is the Nucleophile of the active site. Tyr-109 contributes to the substrate binding site.

It belongs to the tRNA pseudouridine synthase TruA family. As to quaternary structure, homodimer.

The catalysed reaction is uridine(38/39/40) in tRNA = pseudouridine(38/39/40) in tRNA. Its function is as follows. Formation of pseudouridine at positions 38, 39 and 40 in the anticodon stem and loop of transfer RNAs. The polypeptide is tRNA pseudouridine synthase A (Shewanella amazonensis (strain ATCC BAA-1098 / SB2B)).